Consider the following 509-residue polypeptide: Phosphoenolpyruvate carboxylase (509 aa).

Belongs to the PEPCase type 2 family. In terms of assembly, homotetramer. It depends on Mg(2+) as a cofactor.

The enzyme catalyses oxaloacetate + phosphate = phosphoenolpyruvate + hydrogencarbonate. Its function is as follows. Catalyzes the irreversible beta-carboxylation of phosphoenolpyruvate (PEP) to form oxaloacetate (OAA), a four-carbon dicarboxylic acid source for the tricarboxylic acid cycle. The protein is Phosphoenolpyruvate carboxylase of Metallosphaera sedula (strain ATCC 51363 / DSM 5348 / JCM 9185 / NBRC 15509 / TH2).